We begin with the raw amino-acid sequence, 48 residues long: Cytochrome b559 subunit beta (48 aa).

A helical membrane pass occupies residues 23–39; that stretch reads WLAVHALAIPSVFFLGS. Heme is bound at residue histidine 27.

Belongs to the PsbE/PsbF family. Heterodimer of an alpha subunit and a beta subunit. PSII is composed of 1 copy each of membrane proteins PsbA, PsbB, PsbC, PsbD, PsbE, PsbF, PsbH, PsbI, PsbJ, PsbK, PsbL, PsbM, PsbT, PsbX, PsbY, Psb30/Ycf12, peripheral proteins PsbO, CyanoQ (PsbQ), PsbU, PsbV and a large number of cofactors. It forms dimeric complexes. Heme b is required as a cofactor.

Its subcellular location is the cellular thylakoid membrane. This b-type cytochrome is tightly associated with the reaction center of photosystem II (PSII). PSII is a light-driven water:plastoquinone oxidoreductase that uses light energy to abstract electrons from H(2)O, generating O(2) and a proton gradient subsequently used for ATP formation. It consists of a core antenna complex that captures photons, and an electron transfer chain that converts photonic excitation into a charge separation. In Prochlorococcus marinus (strain MIT 9301), this protein is Cytochrome b559 subunit beta.